An 80-amino-acid polypeptide reads, in one-letter code: 14-3-3-like protein 1 (80 aa).

It belongs to the 14-3-3 family.

The sequence is that of 14-3-3-like protein 1 from Pseudotsuga menziesii (Douglas-fir).